Consider the following 333-residue polypeptide: G-protein coupled receptor 146 (333 aa).

Topologically, residues 1–21 (MWSCEDLNYTNSGEEQYLCNE) are extracellular. N-linked (GlcNAc...) asparagine glycosylation occurs at Asn8. Residues 22–42 (FHLFLFIFSVLYLIICFPVGL) form a helical membrane-spanning segment. The Cytoplasmic segment spans residues 43–65 (CYNVQLVLVNLYNKATMTMPDVY). The chain crosses the membrane as a helical span at residues 66–86 (FVNMAIAGLIINAVAPVYLFG). Residues 87–102 (PAYTKWSLWSFGNEVY) are Extracellular-facing. Residues 103–123 (ITLLILFNVSSLVIMYSTTLL) form a helical membrane-spanning segment. Over 124-146 (SLDYYIECALPRTYMSSVYNTKH) the chain is Cytoplasmic. A helical transmembrane segment spans residues 147 to 167 (VCGFIWGGAVLTSFSSLLFYI). Topologically, residues 168-189 (CNHVSTKIIECSKMQNREAADA) are extracellular. Residues 190-210 (IMVLIGYVVPIIAVIYALVLI) traverse the membrane as a helical segment. Over 211 to 234 (LQIRKEATPLDQESGRLDPSVHRL) the chain is Cytoplasmic. A helical transmembrane segment spans residues 235–255 (LIATVCTQFILWTPYYVTLLV). Over 256–275 (NTFMDARVKSSNTFYIRIFQ) the chain is Extracellular. Residues 276–296 (FTEGLSNFLAFSSSFVLPLIH) form a helical membrane-spanning segment. Topologically, residues 297–333 (RHINKNFSGKLQRLLKRLHCGSQGCTHEHTVVQQVMT) are cytoplasmic.

This sequence belongs to the G-protein coupled receptor 1 family.

The protein localises to the cell membrane. Functionally, G-protein coupled receptor required for the regulation of plasma cholesterol levels. The sequence is that of G-protein coupled receptor 146 (gpr146) from Xenopus laevis (African clawed frog).